The sequence spans 893 residues: Phosphatidate phosphatase LPIN2 (893 aa).

Residues 1-108 (MNYVGQLAGQ…LPAYLATSPI (108 aa)) are N-LIP. Residue Ser106 is modified to Phosphoserine. The interval 122 to 216 (LVKSSGNERP…EDYKEPSLFH (95 aa)) is disordered. The segment covering 123–151 (VKSSGNERPAQSSDVSHTLESEAVFTQSS) has biased composition (polar residues). Residues 152 to 162 (VKKKKRRRKKC) are compositionally biased toward basic residues. The short motif at 153–158 (KKKKRR) is the Nuclear localization signal element. Residues Ser174, Ser186, and Ser187 each carry the phosphoserine modification. Over residues 204 to 213 (LKEEDYKEPS) the composition is skewed to basic and acidic residues. Phosphoserine occurs at positions 243 and 303. 2 disordered regions span residues 357 to 400 (LLDA…PDDI) and 417 to 456 (FPKS…TECL). Positions 360 to 371 (ADPVPSPSAEAP) are enriched in low complexity. Over residues 384-393 (KKKGVHKRSQ) the composition is skewed to basic residues. Over residues 423–445 (DPGSRQWPESDTFSGSQSPQSVG) the composition is skewed to polar residues. Ser563 carries the phosphoserine modification. The interval 568–611 (LPETKEGKSEVPPANDLPSNAEEPTSARPAENDTSSDEGSQELE) is disordered. Acidic residues predominate over residues 601-611 (TSSDEGSQELE). The interval 632-834 (YKKSLRLSSD…RIFTVNPKGE (203 aa)) is C-LIP. The short motif at 686–690 (DIDGT) is the DXDXT motif element. An LXXIL motif motif is present at residues 697–701 (LGQIL).

Belongs to the lipin family. The cofactor is Mg(2+). Expressed at high level in liver and to some extend in lung, kidney, placenta, spleen, thymus, lymph node, prostate, testes, small intestine, and colon. Expressed also in circulating red blood cells and site of lymphopoiesis.

Its subcellular location is the nucleus. It localises to the cytoplasm. The protein localises to the cytosol. The protein resides in the endoplasmic reticulum membrane. It carries out the reaction a 1,2-diacyl-sn-glycero-3-phosphate + H2O = a 1,2-diacyl-sn-glycerol + phosphate. Its activity is regulated as follows. Inhibited by N-ethylmaleimide. In terms of biological role, acts as a magnesium-dependent phosphatidate phosphatase enzyme which catalyzes the conversion of phosphatidic acid to diacylglycerol during triglyceride, phosphatidylcholine and phosphatidylethanolamine biosynthesis in the endoplasmic reticulum membrane. Plays important roles in controlling the metabolism of fatty acids at different levels. Also acts as a nuclear transcriptional coactivator for PPARGC1A to modulate lipid metabolism. The chain is Phosphatidate phosphatase LPIN2 from Mus musculus (Mouse).